The sequence spans 181 residues: MAVDANNLIWVDLEMTGLEPDVDRVIEIATLVTDQELNIIAQGPVLAIYQTDEVLAGMDDWNQKHHGESGLVDRVRASKCSEQDAIAQTIDFLAQYVPKGASPMCGNSIGQDRRFLNKYMLELEEFFHYRNIDVSTVKELVRRWSPETMNGFSKKNTHQALEDIKESIAEMQFYRKEVFKI.

Residues 8–171 (LIWVDLEMTG…EDIKESIAEM (164 aa)) form the Exonuclease domain. Residue Tyr-129 is part of the active site.

It belongs to the oligoribonuclease family.

It localises to the cytoplasm. In terms of biological role, 3'-to-5' exoribonuclease specific for small oligoribonucleotides. The polypeptide is Oligoribonuclease (Shewanella frigidimarina (strain NCIMB 400)).